Here is a 214-residue protein sequence, read N- to C-terminus: Large ribosomal subunit protein uL29m (214 aa).

Belongs to the universal ribosomal protein uL29 family. As to quaternary structure, component of the mitochondrial large ribosomal subunit. Mature mitochondrial ribosomes consist of a small (37S) and a large (54S) subunit. The 37S subunit contains at least 33 different proteins and 1 molecule of RNA (15S). The 54S subunit contains at least 45 different proteins and 1 molecule of RNA (21S).

The protein resides in the mitochondrion. The polypeptide is Large ribosomal subunit protein uL29m (mrpl4) (Aspergillus terreus (strain NIH 2624 / FGSC A1156)).